The following is a 385-amino-acid chain: S-adenosylmethionine synthase (385 aa).

Histidine 16 provides a ligand contact to ATP. Residue aspartate 18 coordinates Mg(2+). Position 44 (glutamate 44) interacts with K(+). The L-methionine site is built by glutamate 57 and glutamine 100. Residues glutamine 100–arginine 110 are flexible loop. ATP-binding positions include aspartate 164–lysine 166, lysine 230–phenylalanine 231, aspartate 239, arginine 245–lysine 246, alanine 262, and lysine 266. L-methionine is bound at residue aspartate 239. Lysine 270 is a binding site for L-methionine.

The protein belongs to the AdoMet synthase family. As to quaternary structure, homotetramer; dimer of dimers. Requires Mg(2+) as cofactor. It depends on K(+) as a cofactor.

Its subcellular location is the cytoplasm. It carries out the reaction L-methionine + ATP + H2O = S-adenosyl-L-methionine + phosphate + diphosphate. It participates in amino-acid biosynthesis; S-adenosyl-L-methionine biosynthesis; S-adenosyl-L-methionine from L-methionine: step 1/1. Its function is as follows. Catalyzes the formation of S-adenosylmethionine (AdoMet) from methionine and ATP. The overall synthetic reaction is composed of two sequential steps, AdoMet formation and the subsequent tripolyphosphate hydrolysis which occurs prior to release of AdoMet from the enzyme. In Helicobacter pylori (strain Shi470), this protein is S-adenosylmethionine synthase.